The primary structure comprises 429 residues: MAQAPADPGREGHLEQRILQVLTEAGSPVKLAQLVKECQAPKRELNQVLYRMKKELKVSLTSPATWCLGGTDPEGEGPAELALSSPAERPQQHAATIPETPGPQFSQQREEDIYRFLKDNGPQRALVIAQALGMRTAKDVNRDLYRMKSRHLLDMDEQSKAWTIYRPEDSGRRAKSASIIYQHNPINMICQNGPNSWISIANSEAIQIGHGNIITRQTVSREDGSAGPRHLPSMAPGDSSTWGTLVDPWGPQDIHMEQSILRRVQLGHSNEMRLHGVPSEGPAHIPPGSPPVSATAAGPEASFEARIPSPGTHPEGEAAQRIHMKSCFLEDATIGNSNKMSISPGVAGPGGVAGSGEGEPGEDAGRRPADTQSRSHFPRDIGQPITPSHSKLTPKLETMTLGNRSHKAAEGSHYVDEASHEGSWWGGGI.

Z-binding domains are found at residues 8–70 (PGRE…CLGG) and 103–166 (PQFS…TIYR). The tract at residues 68-107 (LGGTDPEGEGPAELALSSPAERPQQHAATIPETPGPQFSQ) is disordered. 2 short sequence motifs (RIP homotypic interaction motif (RHIM)) span residues 195–219 (NSWISIANSEAIQIGHGNIITRQTV) and 253–277 (DIHMEQSILRRVQLGHSNEMRLHGV). Disordered stretches follow at residues 277–299 (VPSEGPAHIPPGSPPVSATAAGP) and 339–429 (KMSI…GGGI). Gly residues predominate over residues 347–358 (AGPGGVAGSGEG). Basic and acidic residues predominate over residues 407 to 420 (KAAEGSHYVDEASH).

As to quaternary structure, homodimer. Interacts (via RIP homotypic interaction motif) with RIPK3; leading to RIPK3 activation and necroptosis; interaction is enhanced by CASP6. Interacts (via RIP homotypic interaction motif) with RIPK1. Component of the AIM2 PANoptosome complex, a multiprotein complex that drives inflammatory cell death (PANoptosis). (Microbial infection) Interacts (via RIP homotypic interaction motif/RHIM) with herpes simplex virus 1/HHV-1 protein RIR1/ICP6 (via RHIM); this interaction may induce heteromeric amyloid assemblies and prevent necroptosis activation. Interacts with human herpes simplex virus 1/HHV-1 protein ICP0. In terms of processing, phosphorylated. Highly expressed in lymphatic tissues including lymph node, leukocytes, tonsil, bone marrow and spleen. Expressed to a lesser extent in thymus, lung and liver.

The protein resides in the cytoplasm. It is found in the nucleus. With respect to regulation, ZBP1-dependent necroptosis is normally inhibited by RIPK1: RIPK1 inhibits the ZBP1-induced activation of RIPK3 via FADD-mediated recruitment of CASP8, which cleaves RIPK1 and limits TNF-induced necroptosis. Its function is as follows. Key innate sensor that recognizes and binds Z-RNA structures, which are produced by a number of viruses, such as herpesvirus, orthomyxovirus or flavivirus, and triggers different forms of cell death. ZBP1 acts as an essential mediator of pyroptosis, necroptosis and apoptosis (PANoptosis), an integral part of host defense against pathogens, by activating RIPK3, caspase-8 (CASP8), and the NLRP3 inflammasome. Key activator of necroptosis, a programmed cell death process in response to death-inducing TNF-alpha family members, via its ability to bind Z-RNA: once activated upon Z-RNA-binding, ZBP1 interacts and stimulates RIPK3 kinase, which phosphorylates and activates MLKL, triggering execution of programmed necrosis. In addition to TNF-induced necroptosis, necroptosis can also take place in the nucleus in response to orthomyxoviruses infection: ZBP1 recognizes and binds Z-RNA structures that are produced in infected nuclei by orthomyxoviruses, such as the influenza A virus (IAV), leading to ZBP1 activation, RIPK3 stimulation and subsequent MLKL phosphorylation, triggering disruption of the nuclear envelope and leakage of cellular DNA into the cytosol. ZBP1-dependent cell death in response to IAV infection promotes interleukin-1 alpha (IL1A) induction in an NLRP3-inflammasome-independent manner: IL1A expression is required for the optimal interleukin-1 beta (IL1B) production, and together, these cytokines promote infiltration of inflammatory neutrophils to the lung, leading to the formation of neutrophil extracellular traps. In addition to its direct role in driving necroptosis via its ability to sense Z-RNAs, also involved in PANoptosis triggered in response to bacterial infection: component of the AIM2 PANoptosome complex, a multiprotein complex that triggers PANoptosis. Also acts as the apical sensor of fungal infection responsible for activating PANoptosis. Involved in CASP8-mediated cell death via its interaction with RIPK1 but independently of its ability to sense Z-RNAs. In some cell types, also able to restrict viral replication by promoting cell death-independent responses. In response to Zika virus infection in neurons, promotes a cell death-independent pathway that restricts viral replication: together with RIPK3, promotes a death-independent transcriptional program that modifies the cellular metabolism via up-regulation expression of the enzyme ACOD1/IRG1 and production of the metabolite itaconate. Itaconate inhibits the activity of succinate dehydrogenase, generating a metabolic state in neurons that suppresses replication of viral genomes. Functionally, (Microbial infection) In case of herpes simplex virus 1/HHV-1 infection, forms hetero-amyloid structures with HHV-1 protein RIR1/ICP6 which may inhibit ZBP1-mediated necroptosis, thereby preventing host cell death pathway and allowing viral evasion. This Homo sapiens (Human) protein is Z-DNA-binding protein 1.